The chain runs to 150 residues: UPF0039 protein C11D3.02c (150 aa).

Positions 9–150 (KYFNSLDVKE…IPHVEMRLEL (142 aa)) constitute an N-acetyltransferase domain.

The protein belongs to the UPF0039 (ElaA) family.

The sequence is that of UPF0039 protein C11D3.02c from Schizosaccharomyces pombe (strain 972 / ATCC 24843) (Fission yeast).